The sequence spans 400 residues: Glycerol-3-phosphate dehydrogenase [NAD(+)] 1, chloroplastic (400 aa).

Residues 1–32 (MRFRSFFFSSSIFSLSHSRSPSLSSSRFSSLS) constitute a chloroplast transit peptide. NAD(+)-binding positions include 61–66 (GSGNWG), F92, F149, K172, and A205. Residue K172 participates in substrate binding. K257 (proton acceptor) is an active-site residue. 3 residues coordinate NAD(+): R321, K350, and Q352. Position 321-322 (321-322 (RN)) interacts with substrate.

The protein belongs to the NAD-dependent glycerol-3-phosphate dehydrogenase family. Expressed in young seedlings, flowers and siliques. Expressed at low levels in roots.

The protein localises to the plastid. Its subcellular location is the chloroplast. The enzyme catalyses sn-glycerol 3-phosphate + NAD(+) = dihydroxyacetone phosphate + NADH + H(+). It participates in membrane lipid metabolism; glycerophospholipid metabolism. Functionally, involved in glycerolipid metabolism. The sequence is that of Glycerol-3-phosphate dehydrogenase [NAD(+)] 1, chloroplastic (DHAPRD) from Arabidopsis thaliana (Mouse-ear cress).